The primary structure comprises 362 residues: Protein RecA (362 aa).

77 to 84 (GPESSGKT) contributes to the ATP binding site.

It belongs to the RecA family.

The protein localises to the cytoplasm. Its function is as follows. Can catalyze the hydrolysis of ATP in the presence of single-stranded DNA, the ATP-dependent uptake of single-stranded DNA by duplex DNA, and the ATP-dependent hybridization of homologous single-stranded DNAs. It interacts with LexA causing its activation and leading to its autocatalytic cleavage. This is Protein RecA from Nitrobacter winogradskyi (strain ATCC 25391 / DSM 10237 / CIP 104748 / NCIMB 11846 / Nb-255).